The chain runs to 481 residues: GDP-fucose protein O-fucosyltransferase 3 (481 aa).

The Cytoplasmic segment spans residues 1 to 8 (MVRFQRRK). The helical; Signal-anchor for type II membrane protein transmembrane segment at 9 to 31 (LLASCLCVTATVFLMVTLQVVVE) threads the bilayer. Topologically, residues 32–481 (LGKFERKKLK…EEFWALVFKD (450 aa)) are lumenal. Residues Asn-110, Asn-168, and Asn-318 are each glycosylated (N-linked (GlcNAc...) asparagine). Residues Cys-389 and Cys-392 are joined by a disulfide bond. Asn-468 is a glycosylation site (N-linked (GlcNAc...) asparagine).

The protein belongs to the glycosyltransferase 10 family. As to expression, widely expressed, with a higher expression in liver and thymus.

It localises to the endoplasmic reticulum membrane. It catalyses the reaction L-threonyl-[protein] + GDP-beta-L-fucose = 3-O-(alpha-L-fucosyl)-L-threonyl-[protein] + GDP + H(+). The catalysed reaction is L-seryl-[protein] + GDP-beta-L-fucose = 3-O-(alpha-L-fucosyl)-L-seryl-[protein] + GDP + H(+). The protein operates within protein modification; protein glycosylation. Its function is as follows. Protein O-fucosyltransferase that specifically catalyzes O-fucosylation of serine or threonine residues in EMI domains of target proteins, such as MMRN1, MMRN2 and EMID1. Attaches fucose through an O-glycosidic linkage. O-fucosylation of EMI domain-containing proteins may be required for facilitating protein folding and secretion. May also show alpha-(1,3)-fucosyltransferase activity toward the innermost N-acetyl glucosamine (GlcNAc) residue in biantennary N-glycan acceptors. However, this was tested with a library of synthetic substrates and this activity is unsure in vivo. May be involved in biosynthesis of Lewis X-carrying biantennary N-glycans that regulate neuron stem cell self-renewal during brain development. The sequence is that of GDP-fucose protein O-fucosyltransferase 3 from Mus musculus (Mouse).